Reading from the N-terminus, the 384-residue chain is 4-hydroxy-3-methylbut-2-en-1-yl diphosphate synthase (flavodoxin) 1 (384 aa).

[4Fe-4S] cluster is bound by residues cysteine 281, cysteine 284, cysteine 316, and glutamate 323.

This sequence belongs to the IspG family. The cofactor is [4Fe-4S] cluster.

The catalysed reaction is (2E)-4-hydroxy-3-methylbut-2-enyl diphosphate + oxidized [flavodoxin] + H2O + 2 H(+) = 2-C-methyl-D-erythritol 2,4-cyclic diphosphate + reduced [flavodoxin]. Its pathway is isoprenoid biosynthesis; isopentenyl diphosphate biosynthesis via DXP pathway; isopentenyl diphosphate from 1-deoxy-D-xylulose 5-phosphate: step 5/6. In terms of biological role, converts 2C-methyl-D-erythritol 2,4-cyclodiphosphate (ME-2,4cPP) into 1-hydroxy-2-methyl-2-(E)-butenyl 4-diphosphate. The sequence is that of 4-hydroxy-3-methylbut-2-en-1-yl diphosphate synthase (flavodoxin) 1 from Streptomyces coelicolor (strain ATCC BAA-471 / A3(2) / M145).